We begin with the raw amino-acid sequence, 369 residues long: UDP-N-acetylglucosamine--N-acetylmuramyl-(pentapeptide) pyrophosphoryl-undecaprenol N-acetylglucosamine transferase (369 aa).

UDP-N-acetyl-alpha-D-glucosamine contacts are provided by residues 15 to 17 (TGG), Asn126, Arg169, Ser197, and Gln299.

The protein belongs to the glycosyltransferase 28 family. MurG subfamily.

The protein resides in the cell inner membrane. The catalysed reaction is di-trans,octa-cis-undecaprenyl diphospho-N-acetyl-alpha-D-muramoyl-L-alanyl-D-glutamyl-meso-2,6-diaminopimeloyl-D-alanyl-D-alanine + UDP-N-acetyl-alpha-D-glucosamine = di-trans,octa-cis-undecaprenyl diphospho-[N-acetyl-alpha-D-glucosaminyl-(1-&gt;4)]-N-acetyl-alpha-D-muramoyl-L-alanyl-D-glutamyl-meso-2,6-diaminopimeloyl-D-alanyl-D-alanine + UDP + H(+). The protein operates within cell wall biogenesis; peptidoglycan biosynthesis. Cell wall formation. Catalyzes the transfer of a GlcNAc subunit on undecaprenyl-pyrophosphoryl-MurNAc-pentapeptide (lipid intermediate I) to form undecaprenyl-pyrophosphoryl-MurNAc-(pentapeptide)GlcNAc (lipid intermediate II). This is UDP-N-acetylglucosamine--N-acetylmuramyl-(pentapeptide) pyrophosphoryl-undecaprenol N-acetylglucosamine transferase from Methylorubrum extorquens (strain PA1) (Methylobacterium extorquens).